The following is a 260-amino-acid chain: Dof zinc finger protein DOF1.2 (260 aa).

Residues 38–92 (PACPRCASSNTKFCYYNNYSLSQPRYFCKGCRRYWTKGGSLRNIPVGGGCRKRSR) form a Dof-type zinc finger. The Zn(2+) site is built by Cys-40, Cys-43, Cys-65, and Cys-68. A disordered region spans residues 83 to 124 (VGGGCRKRSRSRQNSHKRFGRNENRPDGLINQDDGFQSSPPG). The span at 87 to 101 (CRKRSRSRQNSHKRF) shows a compositional bias: basic residues.

It is found in the nucleus. Transcription factor that binds specifically to a 5'-AA[AG]G-3' consensus core sequence. The chain is Dof zinc finger protein DOF1.2 (DOF1.2) from Arabidopsis thaliana (Mouse-ear cress).